A 1215-amino-acid chain; its full sequence is Cellulose synthase-like protein D4 (1215 aa).

Disordered regions lie at residues 24-46 (GGDAVVRRGSGLTSPVPRHSLGS) and 206-231 (SDTDESDSVTDDDDDEAVSSSEERDQ). A compositionally biased stretch (acidic residues) spans 207 to 222 (DTDESDSVTDDDDDEA). Transmembrane regions (helical) follow at residues 321 to 341 (AILSPYRLLIAIRLVALGFFL) and 352 to 372 (AVWLWAMSVACEVWFAFSWLL). Residues aspartate 452 and aspartate 905 contribute to the active site. Helical transmembrane passes span 988 to 1008 (VFLLAYCLLPAVSLFSGKFIV), 1014 to 1034 (TFLAFLLVITLTLCLLALLEI), 1060 to 1080 (PAAVLQGLLKVIAGVDISFTL), 1114 to 1134 (LMVPPVTIMMVNAVAIAVAAA), 1147 to 1167 (LLGGAFFSFWVLCHLYPFAKG), and 1177 to 1197 (TIVFVWSGLISMIISLLWVYI).

The protein belongs to the glycosyltransferase 2 family. Plant cellulose synthase-like D subfamily.

The protein resides in the golgi apparatus membrane. Its function is as follows. Thought to be a Golgi-localized beta-glycan synthase that polymerize the backbones of noncellulosic polysaccharides (hemicelluloses) of plant cell wall. This Oryza sativa subsp. japonica (Rice) protein is Cellulose synthase-like protein D4 (CSLD4).